The following is a 140-amino-acid chain: Putative pre-16S rRNA nuclease (140 aa).

Belongs to the YqgF nuclease family.

The protein localises to the cytoplasm. In terms of biological role, could be a nuclease involved in processing of the 5'-end of pre-16S rRNA. This Enterococcus faecalis (strain ATCC 700802 / V583) protein is Putative pre-16S rRNA nuclease.